The chain runs to 193 residues: uncharacterized protein (193 aa).

Residues 1 to 84 form a disordered region; the sequence is MTSKCSKWHE…RRSNQRIQLY (84 aa). Residues 43–78 are compositionally biased toward basic residues; that stretch reads SSPRRSSPRRSPRRSSPRRSSPRRSSPRRSSPRRSN.

Belongs to the IIV-6 378R family.

This is an uncharacterized protein from Invertebrate iridescent virus 6 (IIV-6).